The following is a 242-amino-acid chain: Biosynthetic peptidoglycan transglycosylase (242 aa).

Residues Leu-19–Val-39 traverse the membrane as a helical segment.

It belongs to the glycosyltransferase 51 family.

It is found in the cell inner membrane. It carries out the reaction [GlcNAc-(1-&gt;4)-Mur2Ac(oyl-L-Ala-gamma-D-Glu-L-Lys-D-Ala-D-Ala)](n)-di-trans,octa-cis-undecaprenyl diphosphate + beta-D-GlcNAc-(1-&gt;4)-Mur2Ac(oyl-L-Ala-gamma-D-Glu-L-Lys-D-Ala-D-Ala)-di-trans,octa-cis-undecaprenyl diphosphate = [GlcNAc-(1-&gt;4)-Mur2Ac(oyl-L-Ala-gamma-D-Glu-L-Lys-D-Ala-D-Ala)](n+1)-di-trans,octa-cis-undecaprenyl diphosphate + di-trans,octa-cis-undecaprenyl diphosphate + H(+). It functions in the pathway cell wall biogenesis; peptidoglycan biosynthesis. Functionally, peptidoglycan polymerase that catalyzes glycan chain elongation from lipid-linked precursors. This is Biosynthetic peptidoglycan transglycosylase from Escherichia coli O157:H7.